We begin with the raw amino-acid sequence, 418 residues long: Probable cysteine desulfurase 2 (418 aa).

N6-(pyridoxal phosphate)lysine is present on K234. The active-site Cysteine persulfide intermediate is C374.

It belongs to the class-V pyridoxal-phosphate-dependent aminotransferase family. Csd subfamily. Pyridoxal 5'-phosphate is required as a cofactor.

It catalyses the reaction (sulfur carrier)-H + L-cysteine = (sulfur carrier)-SH + L-alanine. Functionally, catalyzes the removal of elemental sulfur and selenium atoms from L-cysteine, L-cystine, L-selenocysteine, and L-selenocystine to produce L-alanine. This chain is Probable cysteine desulfurase 2 (csd2), found in Mycobacterium leprae (strain TN).